The sequence spans 389 residues: S-adenosylmethionine synthase (389 aa).

An ATP-binding site is contributed by histidine 17. Aspartate 19 lines the Mg(2+) pocket. Glutamate 45 contacts K(+). L-methionine-binding residues include glutamate 58 and glutamine 101. The flexible loop stretch occupies residues 101–111 (QSPDIGQGVDV). Residues 160-162 (DGK), 226-227 (RF), aspartate 235, 241-242 (RK), alanine 258, and lysine 262 each bind ATP. Aspartate 235 contacts L-methionine. Lysine 266 contacts L-methionine.

Belongs to the AdoMet synthase family. Homotetramer; dimer of dimers. Mg(2+) is required as a cofactor. K(+) serves as cofactor.

It is found in the cytoplasm. It catalyses the reaction L-methionine + ATP + H2O = S-adenosyl-L-methionine + phosphate + diphosphate. It participates in amino-acid biosynthesis; S-adenosyl-L-methionine biosynthesis; S-adenosyl-L-methionine from L-methionine: step 1/1. Functionally, catalyzes the formation of S-adenosylmethionine (AdoMet) from methionine and ATP. The overall synthetic reaction is composed of two sequential steps, AdoMet formation and the subsequent tripolyphosphate hydrolysis which occurs prior to release of AdoMet from the enzyme. The polypeptide is S-adenosylmethionine synthase (Anaeromyxobacter sp. (strain Fw109-5)).